A 48-amino-acid chain; its full sequence is Large ribosomal subunit protein eL40 (48 aa).

It belongs to the eukaryotic ribosomal protein eL40 family.

This chain is Large ribosomal subunit protein eL40, found in Methanoculleus marisnigri (strain ATCC 35101 / DSM 1498 / JR1).